The chain runs to 292 residues: Ribosomal protein L11 methyltransferase (292 aa).

The S-adenosyl-L-methionine site is built by Thr-144, Gly-165, Asp-187, and Asn-229.

This sequence belongs to the methyltransferase superfamily. PrmA family.

It is found in the cytoplasm. The enzyme catalyses L-lysyl-[protein] + 3 S-adenosyl-L-methionine = N(6),N(6),N(6)-trimethyl-L-lysyl-[protein] + 3 S-adenosyl-L-homocysteine + 3 H(+). In terms of biological role, methylates ribosomal protein L11. This chain is Ribosomal protein L11 methyltransferase, found in Ectopseudomonas mendocina (strain ymp) (Pseudomonas mendocina).